We begin with the raw amino-acid sequence, 593 residues long: Melanopsin-A (593 aa).

Topologically, residues 1–77 (MMSGAAHSVR…VDVPDHAHYT (77 aa)) are extracellular. Residues 78–98 (IGAVILTVGITGMLGNFLVIY) form a helical membrane-spanning segment. At 99-112 (AFSRSRTLRTPANL) the chain is on the cytoplasmic side. The helical transmembrane segment at 113-133 (FIINLAITDFLMCATQAPIFF) threads the bilayer. Over 134 to 150 (TTSMHKRWIFGEKGCEL) the chain is Extracellular. A disulfide bridge links C148 with C226. Residues 151–171 (YAFCGALFGICSMITLMVIAV) form a helical membrane-spanning segment. Residues 172–191 (DRYFVITRPLASIGVLSQKR) lie on the Cytoplasmic side of the membrane. A helical transmembrane segment spans residues 192–212 (ALLILLVAWVYSLGWSLPPFF). Topologically, residues 213–243 (GWSAYVPEGLLTSCTWDYMTFTPSVRAYTML) are extracellular. Residues 244–264 (LFIFVFFIPLIVIIYCYFFIF) form a helical membrane-spanning segment. Residues 265-300 (RSIRTTNEAVGKINGDNKRDSMKRFQRLKNEWKMAK) are Cytoplasmic-facing. A helical membrane pass occupies residues 301–321 (IALIVILMYVISWSPYSTVAL). Topologically, residues 322–336 (TAFAGYSDFLTPYMN) are extracellular. Residues 337-357 (SVPAVIAKASAIHNPIIYAIT) traverse the membrane as a helical segment. Residue K344 is modified to N6-(retinylidene)lysine. Over 358–593 (HPKYRLAIAK…HIDNHRPQYL (236 aa)) the chain is Cytoplasmic. Disordered stretches follow at residues 397–449 (TVTS…RQVS) and 547–593 (RSNV…PQYL). Positions 414 to 449 (TGKSRLSSASDSESGWTDTEADLSSMSSRPASRQVS) are enriched in polar residues. Basic and acidic residues predominate over residues 581–593 (ESGHIDNHRPQYL).

This sequence belongs to the G-protein coupled receptor 1 family. Opsin subfamily.

It is found in the cell membrane. Functionally, photoreceptor implicated in non-image-forming responses to light. May be able to isomerize covalently bound all-trans retinal back to 11-cis retinal. This chain is Melanopsin-A (opn4a), found in Danio rerio (Zebrafish).